The chain runs to 222 residues: Nucleoside triphosphate pyrophosphatase (222 aa).

Asp-82 serves as the catalytic Proton acceptor.

Belongs to the Maf family. It depends on a divalent metal cation as a cofactor.

It is found in the cytoplasm. The enzyme catalyses a ribonucleoside 5'-triphosphate + H2O = a ribonucleoside 5'-phosphate + diphosphate + H(+). The catalysed reaction is a 2'-deoxyribonucleoside 5'-triphosphate + H2O = a 2'-deoxyribonucleoside 5'-phosphate + diphosphate + H(+). In terms of biological role, nucleoside triphosphate pyrophosphatase. May have a dual role in cell division arrest and in preventing the incorporation of modified nucleotides into cellular nucleic acids. This Mycobacterium bovis (strain ATCC BAA-935 / AF2122/97) protein is Nucleoside triphosphate pyrophosphatase.